We begin with the raw amino-acid sequence, 74 residues long: Mitochondrial import receptor subunit TOM6 homolog (74 aa).

Positions M1 to E16 are enriched in polar residues. The disordered stretch occupies residues M1–D22. The residue at position 2 (A2) is an N-acetylalanine.

This sequence belongs to the Tom6 family. In terms of assembly, forms part of the preprotein translocase complex of the outer mitochondrial membrane (TOM complex) which consists of at least 7 different proteins (TOMM5, TOMM6, TOMM7, TOMM20, TOMM22, TOMM40 and TOMM70).

The protein resides in the mitochondrion outer membrane. The chain is Mitochondrial import receptor subunit TOM6 homolog (TOMM6) from Homo sapiens (Human).